The primary structure comprises 2430 residues: DNA-directed RNA polymerase subunit beta'' (2430 aa).

The Zn(2+) site is built by Cys336, Cys455, Cys462, and Cys465.

This sequence belongs to the RNA polymerase beta' chain family. RpoC2 subfamily. In plastids the minimal PEP RNA polymerase catalytic core is composed of four subunits: alpha, beta, beta', and beta''. When a (nuclear-encoded) sigma factor is associated with the core the holoenzyme is formed, which can initiate transcription. Requires Zn(2+) as cofactor.

The protein resides in the plastid. It localises to the chloroplast. The enzyme catalyses RNA(n) + a ribonucleoside 5'-triphosphate = RNA(n+1) + diphosphate. DNA-dependent RNA polymerase catalyzes the transcription of DNA into RNA using the four ribonucleoside triphosphates as substrates. The sequence is that of DNA-directed RNA polymerase subunit beta'' from Stigeoclonium helveticum (Green alga).